The sequence spans 907 residues: Lipoxygenase 1, chloroplastic (907 aa).

A chloroplast-targeting transit peptide spans 1 to 49 (MALAKQIMGASLMDQKTSVFGSNLCLNHVLVNKHRLRLRKTRKNGSMVV). The PLAT domain occupies 85–209 (DFFKDTIFRK…DLPNPRIFFT (125 aa)). The Lipoxygenase domain maps to 212 to 907 (PYLPDETPVG…CRGVPNSISI (696 aa)). The Fe cation site is built by His-567, His-572, His-758, Asn-762, and Ile-907.

This sequence belongs to the lipoxygenase family. Requires Fe cation as cofactor. Confined to glandular trichomes in flowers, and, at low levels, in leaves.

Its subcellular location is the plastid. It is found in the chloroplast. The enzyme catalyses (9Z,12Z,15Z)-octadecatrienoate + O2 = 13-hydroperoxy-(9Z,11E,15Z)-octadecatrienoate. It participates in lipid metabolism; oxylipin biosynthesis. Its pathway is isoprenoid biosynthesis. Component of the monoterpenoid pyrethrins biosynthesis; pyrethrins are widely used plant-derived pesticide. Plant lipoxygenases may be involved in a number of diverse aspects of plant physiology including growth and development, pest resistance, and senescence or responses to wounding. Catalyzes the hydroperoxidation of lipids containing a cis,cis-1,4-pentadiene structure. Mediates the peroxidation of linolenic acid leading to the production of 13-hydroperoxylinolenic acid. This is Lipoxygenase 1, chloroplastic from Tanacetum cinerariifolium (Dalmatian daisy).